The following is a 466-amino-acid chain: 3-isopropylmalate dehydratase large subunit (466 aa).

[4Fe-4S] cluster-binding residues include C347, C407, and C410.

The protein belongs to the aconitase/IPM isomerase family. LeuC type 1 subfamily. Heterodimer of LeuC and LeuD. It depends on [4Fe-4S] cluster as a cofactor.

It catalyses the reaction (2R,3S)-3-isopropylmalate = (2S)-2-isopropylmalate. It functions in the pathway amino-acid biosynthesis; L-leucine biosynthesis; L-leucine from 3-methyl-2-oxobutanoate: step 2/4. Catalyzes the isomerization between 2-isopropylmalate and 3-isopropylmalate, via the formation of 2-isopropylmaleate. This Blochmanniella pennsylvanica (strain BPEN) protein is 3-isopropylmalate dehydratase large subunit.